The chain runs to 499 residues: Lysine--tRNA ligase (499 aa).

Mg(2+)-binding residues include Glu407 and Glu414.

It belongs to the class-II aminoacyl-tRNA synthetase family. As to quaternary structure, homodimer. Requires Mg(2+) as cofactor.

It is found in the cytoplasm. The catalysed reaction is tRNA(Lys) + L-lysine + ATP = L-lysyl-tRNA(Lys) + AMP + diphosphate. In Lactiplantibacillus plantarum (strain ATCC BAA-793 / NCIMB 8826 / WCFS1) (Lactobacillus plantarum), this protein is Lysine--tRNA ligase.